The following is a 146-amino-acid chain: Hemoglobin subunit beta (146 aa).

Residue Val-1 is modified to N-acetylvaline. The 145-residue stretch at 2 to 146 (HLTAAEKSAI…VANALAHKYH (145 aa)) folds into the Globin domain. His-63 contributes to the heme b binding site. Lys-82 carries the post-translational modification N6-acetyllysine. His-92 contacts heme b. S-nitrosocysteine is present on Cys-93. Lys-144 carries the post-translational modification N6-acetyllysine.

Belongs to the globin family. As to quaternary structure, heterotetramer of two alpha chains and two beta chains. As to expression, red blood cells.

Involved in oxygen transport from the lung to the various peripheral tissues. This chain is Hemoglobin subunit beta (HBB), found in Cavia porcellus (Guinea pig).